The primary structure comprises 105 residues: Large ribosomal subunit protein uL24 (105 aa).

It belongs to the universal ribosomal protein uL24 family. In terms of assembly, part of the 50S ribosomal subunit.

Its function is as follows. One of two assembly initiator proteins, it binds directly to the 5'-end of the 23S rRNA, where it nucleates assembly of the 50S subunit. In terms of biological role, one of the proteins that surrounds the polypeptide exit tunnel on the outside of the subunit. In Clostridium kluyveri (strain ATCC 8527 / DSM 555 / NBRC 12016 / NCIMB 10680 / K1), this protein is Large ribosomal subunit protein uL24.